Here is a 220-residue protein sequence, read N- to C-terminus: Ribose-5-phosphate isomerase A (220 aa).

Substrate-binding positions include 28 to 31 (TGST), 81 to 84 (DGAD), and 94 to 97 (KGGG). The active-site Proton acceptor is Glu103. Lys121 serves as a coordination point for substrate.

The protein belongs to the ribose 5-phosphate isomerase family. In terms of assembly, homodimer.

The enzyme catalyses aldehydo-D-ribose 5-phosphate = D-ribulose 5-phosphate. Its pathway is carbohydrate degradation; pentose phosphate pathway; D-ribose 5-phosphate from D-ribulose 5-phosphate (non-oxidative stage): step 1/1. Its function is as follows. Catalyzes the reversible conversion of ribose-5-phosphate to ribulose 5-phosphate. This Coxiella burnetii (strain CbuK_Q154) (Coxiella burnetii (strain Q154)) protein is Ribose-5-phosphate isomerase A.